A 136-amino-acid polypeptide reads, in one-letter code: Large ribosomal subunit protein uL16 (136 aa).

It belongs to the universal ribosomal protein uL16 family. As to quaternary structure, part of the 50S ribosomal subunit.

Its function is as follows. Binds 23S rRNA and is also seen to make contacts with the A and possibly P site tRNAs. The protein is Large ribosomal subunit protein uL16 of Citrobacter koseri (strain ATCC BAA-895 / CDC 4225-83 / SGSC4696).